Here is a 325-residue protein sequence, read N- to C-terminus: RNA ligase 1 (325 aa).

Mg(2+) serves as cofactor. The cofactor is Mn(2+). AMPylates itself (auto-AMPylation).

It catalyses the reaction ATP + (ribonucleotide)n-3'-hydroxyl + 5'-phospho-(ribonucleotide)m = (ribonucleotide)n+m + AMP + diphosphate.. Its function is as follows. Functions as an RNA ligase, in vitro. The ligation reaction entails three nucleotidyl transfer steps. In the first step, the RNA ligase reacts with ATP in the absence of nucleic acid to form a covalent ligase-AMP intermediate and release pyrophosphate. In step 2, the ligase-AMP binds to the nucleic acid and transfers the adenylate to the 5'-PO4 terminus to form an adenylylated intermediate. In step 3, the RNA ligase directs the attack of the 3'-OH on the 5'-phosphoanhydride linkage, resulting in a repaired 3'-5' phosphodiester and release of AMP. Exhibits selectivity for single-stranded RNA substrates and may not have nick-sealing activity on double-stranded DNA-RNA hybrids. May play a role in maintaining RNA integrity under stress conditions, for example in response to reactive oxygen species (ROS). This chain is RNA ligase 1, found in Danio rerio (Zebrafish).